The sequence spans 75 residues: Large ribosomal subunit protein bL28 (75 aa).

Belongs to the bacterial ribosomal protein bL28 family.

The polypeptide is Large ribosomal subunit protein bL28 (Buchnera aphidicola subsp. Acyrthosiphon pisum (strain APS) (Acyrthosiphon pisum symbiotic bacterium)).